Consider the following 74-residue polypeptide: ATP synthase subunit 9, mitochondrial (74 aa).

The next 2 membrane-spanning stretches (helical) occupy residues 8–28 (IGAG…GLIF) and 50–70 (ILGF…AFLI).

Belongs to the ATPase C chain family. F-type ATPases have 2 components, CF(1) - the catalytic core - and CF(0) - the membrane proton channel. CF(1) has five subunits: alpha(3), beta(3), gamma(1), delta(1), epsilon(1). CF(0) has three main subunits: a, b and c.

Its subcellular location is the mitochondrion membrane. Its function is as follows. Mitochondrial membrane ATP synthase (F(1)F(0) ATP synthase or Complex V) produces ATP from ADP in the presence of a proton gradient across the membrane which is generated by electron transport complexes of the respiratory chain. F-type ATPases consist of two structural domains, F(1) - containing the extramembraneous catalytic core and F(0) - containing the membrane proton channel, linked together by a central stalk and a peripheral stalk. During catalysis, ATP synthesis in the catalytic domain of F(1) is coupled via a rotary mechanism of the central stalk subunits to proton translocation. Part of the complex F(0) domain. A homomeric c-ring of probably 10 subunits is part of the complex rotary element. In Schizosaccharomyces pombe (strain 972 / ATCC 24843) (Fission yeast), this protein is ATP synthase subunit 9, mitochondrial (atp9).